The sequence spans 431 residues: IMP-specific 5'-nucleotidase 1 (431 aa).

Position 117 (Lys117) interacts with ATP. Asp157 acts as the Nucleophile in catalysis. IMP-binding residues include Asp157, Asp159, Asp165, Thr193, Asp349, and Lys357. Asp157 and Asp159 together coordinate Mg(2+). Asp159 functions as the Proton donor in the catalytic mechanism. Mg(2+) is bound at residue Asp388.

Belongs to the ISN1 family. Homotetramer. It depends on Mg(2+) as a cofactor.

The catalysed reaction is IMP + H2O = inosine + phosphate. Allosterically activated by ATP. ATP binding is a prerequisite to magnesium and substrate binding. ATP binds to 2 of the subunits in the homotetramer inducing a closure of these 2 subunits and the release of the C-terminal loop, thereby activating the enzyme. IMP-specific 5'-nucleotidase involved in IMP (inositol monophosphate) degradation. The polypeptide is IMP-specific 5'-nucleotidase 1 (isn-1) (Neurospora crassa (strain ATCC 24698 / 74-OR23-1A / CBS 708.71 / DSM 1257 / FGSC 987)).